We begin with the raw amino-acid sequence, 140 residues long: 3-hydroxyacyl-[acyl-carrier-protein] dehydratase FabZ (140 aa).

The active site involves His-47.

Belongs to the thioester dehydratase family. FabZ subfamily.

It is found in the cytoplasm. It catalyses the reaction a (3R)-hydroxyacyl-[ACP] = a (2E)-enoyl-[ACP] + H2O. Involved in unsaturated fatty acids biosynthesis. Catalyzes the dehydration of short chain beta-hydroxyacyl-ACPs and long chain saturated and unsaturated beta-hydroxyacyl-ACPs. The sequence is that of 3-hydroxyacyl-[acyl-carrier-protein] dehydratase FabZ from Streptococcus agalactiae serotype III (strain NEM316).